The chain runs to 362 residues: Class I histocompatibility antigen, Gogo-B*0102 alpha chain (362 aa).

The signal sequence occupies residues 1–24 (MRVTAPRTLLLLLSAALALTETWA). The alpha-1 stretch occupies residues 25–114 (GSHSMRYFDT…ALRYYNQSEA (90 aa)). The Extracellular portion of the chain corresponds to 25–308 (GSHSMRYFDT…EPSSQSTIPI (284 aa)). The N-linked (GlcNAc...) asparagine glycan is linked to asparagine 110. The segment at 115–206 (GSHTFQRMFG…ENGRETLQRA (92 aa)) is alpha-2. 2 cysteine pairs are disulfide-bonded: cysteine 125/cysteine 188 and cysteine 227/cysteine 283. Residues 207-298 (DTPKTHVTHH…GLPKPLTLRW (92 aa)) form an alpha-3 region. Positions 209–295 (PKTHVTHHPI…QHEGLPKPLT (87 aa)) constitute an Ig-like C1-type domain. The interval 299-308 (EPSSQSTIPI) is connecting peptide. A helical membrane pass occupies residues 309-332 (VGIVAGLAVLAVVVIGAVVTAVIC). Residues 333-362 (RRKSSGGKGGSYSQAASSDSAQGSDVSLTA) lie on the Cytoplasmic side of the membrane. A disordered region spans residues 335–362 (KSSGGKGGSYSQAASSDSAQGSDVSLTA). Residues 343–362 (SYSQAASSDSAQGSDVSLTA) show a composition bias toward low complexity.

This sequence belongs to the MHC class I family. Heterodimer of an alpha chain and a beta chain (beta-2-microglobulin).

The protein localises to the membrane. Its function is as follows. Involved in the presentation of foreign antigens to the immune system. The polypeptide is Class I histocompatibility antigen, Gogo-B*0102 alpha chain (Gorilla gorilla gorilla (Western lowland gorilla)).